Consider the following 331-residue polypeptide: Beta-ketoacyl-[acyl-carrier-protein] synthase III (331 aa).

Catalysis depends on residues Cys-113 and His-253. Positions 254-258 are ACP-binding; sequence QANTR. Asn-283 is a catalytic residue.

It belongs to the thiolase-like superfamily. FabH family. As to quaternary structure, homodimer.

It localises to the cytoplasm. It catalyses the reaction malonyl-[ACP] + acetyl-CoA + H(+) = 3-oxobutanoyl-[ACP] + CO2 + CoA. The protein operates within lipid metabolism; fatty acid biosynthesis. Functionally, catalyzes the condensation reaction of fatty acid synthesis by the addition to an acyl acceptor of two carbons from malonyl-ACP. Catalyzes the first condensation reaction which initiates fatty acid synthesis and may therefore play a role in governing the total rate of fatty acid production. Possesses both acetoacetyl-ACP synthase and acetyl transacylase activities. Its substrate specificity determines the biosynthesis of branched-chain and/or straight-chain of fatty acids. The chain is Beta-ketoacyl-[acyl-carrier-protein] synthase III from Desulfitobacterium hafniense (strain Y51).